We begin with the raw amino-acid sequence, 370 residues long: Myomodulin neuropeptides 1 (370 aa).

The first 18 residues, 1 to 18 (MQVYMLLPLAVFASLTYQ), serve as a signal peptide directing secretion. Positions 19 to 50 (GACEETAAAQTSSDASTSSASSEHAENELSRA) are excised as a propeptide. Residues 28–40 (QTSSDASTSSASS) show a composition bias toward low complexity. Residues 28-52 (QTSSDASTSSASSEHAENELSRAKR) form a disordered region. Residues L60 and L69 each carry the leucine amide modification. Positions 73-190 (GGPVEPESEE…EPEEGGLGEE (118 aa)) are excised as a propeptide. Leucine amide occurs at positions 199 and 209. Residues 210–226 (GKREGEEGDEMDKKQDE) are compositionally biased toward basic and acidic residues. The segment at 210-230 (GKREGEEGDEMDKKQDESLND) is disordered. The propeptide occupies 213-237 (EGEEGDEMDKKQDESLNDDFENDDI). L246, L256, L266, L276, L286, L296, L306, L316, L326, L336, and L346 each carry leucine amide. The tract at residues 344–370 (LRLGKRDDDEKEKKSLNMSRLGKRSTQ) is disordered. Residues 347 to 358 (GKRDDDEKEKKS) are compositionally biased toward basic and acidic residues. A propeptide spanning residues 350-355 (DDDEKE) is cleaved from the precursor. L364 is subject to Leucine amide. Residues 368-370 (STQ) constitute a propeptide that is removed on maturation.

As to expression, expressed in all ganglia of the CNS, but only in a subset of neurons including L10 in the abdominal ganglion and B16 in the buccal ganglion.

It is found in the secreted. Functionally, exogenous application of myomodulins potentiates ARC muscle contraction. In Aplysia californica (California sea hare), this protein is Myomodulin neuropeptides 1 (MYOMOD1).